The primary structure comprises 387 residues: DNA double-strand break repair protein Mre11 (387 aa).

Positions 11, 13, 52, and 87 each coordinate Mn(2+). The Proton donor role is filled by His-88. Residues His-159, His-190, and His-192 each coordinate Mn(2+).

It belongs to the MRE11/RAD32 family. As to quaternary structure, homodimer. Forms a heterotetramer composed of two Mre11 subunits and two Rad50 subunits. Interacts with HerA. Mn(2+) serves as cofactor.

Nuclease activity is regulated by Rad50. In terms of biological role, part of the Rad50/Mre11 complex, which is involved in the early steps of DNA double-strand break (DSB) repair. The complex may facilitate opening of the processed DNA ends to aid in the recruitment of HerA and NurA. Mre11 binds to DSB ends and has both double-stranded 3'-5' exonuclease activity and single-stranded endonuclease activity. This Sulfurisphaera tokodaii (strain DSM 16993 / JCM 10545 / NBRC 100140 / 7) (Sulfolobus tokodaii) protein is DNA double-strand break repair protein Mre11.